We begin with the raw amino-acid sequence, 424 residues long: Tubulin gamma chain, nucleomorph (424 aa).

Residue 137-143 coordinates GTP; that stretch reads NGGTGAG.

The protein belongs to the tubulin family.

Functionally, tubulin is the major constituent of microtubules. The gamma chain is found at microtubule organizing centers (MTOC) such as the spindle poles or the centrosome, suggesting that it is involved in the minus-end nucleation of microtubule assembly. The chain is Tubulin gamma chain, nucleomorph (tubG) from Guillardia theta (Cryptophyte).